Here is a 322-residue protein sequence, read N- to C-terminus: Fructose-1,6-bisphosphatase class 1 1 (322 aa).

4 residues coordinate Mg(2+): glutamate 84, aspartate 103, leucine 105, and aspartate 106. Substrate-binding positions include aspartate 106–serine 109, asparagine 198, and lysine 264. Residue glutamate 270 coordinates Mg(2+).

Belongs to the FBPase class 1 family. In terms of assembly, homotetramer. Requires Mg(2+) as cofactor.

The protein resides in the cytoplasm. It carries out the reaction beta-D-fructose 1,6-bisphosphate + H2O = beta-D-fructose 6-phosphate + phosphate. It functions in the pathway carbohydrate biosynthesis; gluconeogenesis. The chain is Fructose-1,6-bisphosphatase class 1 1 from Pseudoalteromonas translucida (strain TAC 125).